Consider the following 168-residue polypeptide: Disulfide bond formation protein B (168 aa).

The Cytoplasmic segment spans residues 1-13; that stretch reads MFLTYFDAMPRRV. The helical transmembrane segment at 14–30 threads the bilayer; sequence LALVSLACVALLAFGLY. At 31-48 the chain is on the periplasmic side; it reads LQHVVGLEPCPMCIVQRY. Cys40 and Cys43 form a disulfide bridge. Residues 49 to 64 form a helical membrane-spanning segment; it reads ALVLVAVVAGITAVAK. Residues 65–70 are Cytoplasmic-facing; that stretch reads SRGLLI. Residues 71–88 form a helical membrane-spanning segment; that stretch reads TGSGLLVLLSGFGAFVAA. Residues 89–144 lie on the Periplasmic side of the membrane; that stretch reads RQSFLQWYPPEVASCGRDFYGMIETFPLKRAIPMIFKGSGDCTKIDWTFLGLSIAN. A disulfide bond links Cys103 and Cys130. Residues 145–163 traverse the membrane as a helical segment; the sequence is WSFLCFVAIALVGLVLITR. Residues 164–168 lie on the Cytoplasmic side of the membrane; sequence LARQR.

It belongs to the DsbB family.

The protein localises to the cell inner membrane. In terms of biological role, required for disulfide bond formation in some periplasmic proteins. Acts by oxidizing the DsbA protein. The polypeptide is Disulfide bond formation protein B (Polaromonas sp. (strain JS666 / ATCC BAA-500)).